Here is a 20-residue protein sequence, read N- to C-terminus: Magnificalysin I (20 aa).

The plays an important role in the hemolytic activity stretch occupies residues 1–10 (ALAGTIIAGA). Positions 9–20 (GASLTFKILDEV) are N-terminal region.

The protein belongs to the actinoporin family. Sea anemone subfamily. Octamer or nonamer in membranes. Monomer in the soluble state.

The protein resides in the secreted. Its subcellular location is the nematocyst. It is found in the target cell membrane. Pore-forming protein that forms cations-selective hydrophilic pores of around 1 nm and causes cytolysis. Pore formation is a multi-step process that involves specific recognition of membrane sphingomyelin (but neither cholesterol nor phosphatidylcholine) using aromatic rich region and adjacent phosphocholine (POC) binding site, firm binding to the membrane (mainly driven by hydrophobic interactions) accompanied by the transfer of the N-terminal region to the lipid-water interface and finally pore formation after oligomerization of monomers. In Heteractis magnifica (Magnificent sea anemone), this protein is Magnificalysin I.